The sequence spans 103 residues: MYAVVATGGKQYKVSEGDIIYVEKLEAEVDSTIELDKVLMINKDEGLVVGKPVVEGAKVKAKVLKQGKAKKIIVFKYKPKKDYRKKQGHRQPYTKLQIEKIDA.

Belongs to the bacterial ribosomal protein bL21 family. In terms of assembly, part of the 50S ribosomal subunit. Contacts protein L20.

Its function is as follows. This protein binds to 23S rRNA in the presence of protein L20. This chain is Large ribosomal subunit protein bL21, found in Clostridium kluyveri (strain NBRC 12016).